Here is a 294-residue protein sequence, read N- to C-terminus: 2-dehydropantoate 2-reductase (294 aa).

Residues 10-15 (GAGALG), R34, K74, N98, and A122 contribute to the NADP(+) site. Residue K178 is the Proton donor of the active site. Residues K178, N182, N186, N196, and 243 to 246 (NRSS) each bind substrate. NADP(+) is bound at residue E258.

This sequence belongs to the ketopantoate reductase family.

Its subcellular location is the cytoplasm. The enzyme catalyses (R)-pantoate + NAD(+) = 2-dehydropantoate + NADH + H(+). It catalyses the reaction (R)-pantoate + NADP(+) = 2-dehydropantoate + NADPH + H(+). The protein operates within cofactor biosynthesis; coenzyme A biosynthesis. Catalyzes the NAD(P)H-dependent reduction of ketopantoate into pantoic acid. This is 2-dehydropantoate 2-reductase from Archaeoglobus fulgidus (strain ATCC 49558 / DSM 4304 / JCM 9628 / NBRC 100126 / VC-16).